Consider the following 122-residue polypeptide: Large ribosomal subunit protein uL18 (122 aa).

Belongs to the universal ribosomal protein uL18 family. As to quaternary structure, part of the 50S ribosomal subunit; part of the 5S rRNA/L5/L18/L25 subcomplex. Contacts the 5S and 23S rRNAs.

In terms of biological role, this is one of the proteins that bind and probably mediate the attachment of the 5S RNA into the large ribosomal subunit, where it forms part of the central protuberance. This chain is Large ribosomal subunit protein uL18, found in Kosmotoga olearia (strain ATCC BAA-1733 / DSM 21960 / TBF 19.5.1).